Consider the following 359-residue polypeptide: Putative nucleotidyltransferase MAB21L1 (359 aa).

A ribonucleoside 5'-triphosphate-binding positions include 23–24 and 63–66; these read RK and YEGL. Glu73 and Glu75 together coordinate Mg(2+). Residues Lys248 and 252-255 contribute to the a ribonucleoside 5'-triphosphate site; that span reads SILK.

This sequence belongs to the mab-21 family. Monomer. Homodecamer; composed of 2 back to back homopentamers. The protein may exist as monomer in solution and oiligomerizes upon ligand binding.

It localises to the nucleus. Its function is as follows. Putative nucleotidyltransferase required for several aspects of embryonic development including normal development of the eye. It is unclear whether it displays nucleotidyltransferase activity in vivo. Binds single-stranded RNA (ssRNA). The protein is Putative nucleotidyltransferase MAB21L1 (MAB21L1) of Bos taurus (Bovine).